The chain runs to 181 residues: Adenine phosphoribosyltransferase (181 aa).

It belongs to the purine/pyrimidine phosphoribosyltransferase family. As to quaternary structure, homodimer.

The protein localises to the cytoplasm. The enzyme catalyses AMP + diphosphate = 5-phospho-alpha-D-ribose 1-diphosphate + adenine. Its pathway is purine metabolism; AMP biosynthesis via salvage pathway; AMP from adenine: step 1/1. In terms of biological role, catalyzes a salvage reaction resulting in the formation of AMP, that is energically less costly than de novo synthesis. The chain is Adenine phosphoribosyltransferase from Acidobacterium capsulatum (strain ATCC 51196 / DSM 11244 / BCRC 80197 / JCM 7670 / NBRC 15755 / NCIMB 13165 / 161).